The sequence spans 259 residues: Flagellar L-ring protein 1 (259 aa).

The N-terminal stretch at 1–15 (MKRICLLALITTMSG) is a signal peptide. A lipid anchor (N-palmitoyl cysteine) is attached at C16. The S-diacylglycerol cysteine moiety is linked to residue C16. The segment at 38–63 (EGDKSKDESSGIVDTLRGRNDPVAGD) is disordered.

Belongs to the FlgH family. As to quaternary structure, the basal body constitutes a major portion of the flagellar organelle and consists of four rings (L,P,S, and M) mounted on a central rod.

It localises to the cell outer membrane. Its subcellular location is the bacterial flagellum basal body. In terms of biological role, assembles around the rod to form the L-ring and probably protects the motor/basal body from shearing forces during rotation. The protein is Flagellar L-ring protein 1 (flgH1) of Vibrio parahaemolyticus serotype O3:K6 (strain RIMD 2210633).